We begin with the raw amino-acid sequence, 529 residues long: Peptide chain release factor 3 (529 aa).

The 270-residue stretch at 11 to 280 (AKRRTFAIIS…GLVAWAPAPM (270 aa)) folds into the tr-type G domain. GTP is bound by residues 20-27 (SHPDAGKT), 88-92 (DTPGH), and 142-145 (NKLD).

Belongs to the TRAFAC class translation factor GTPase superfamily. Classic translation factor GTPase family. PrfC subfamily.

It localises to the cytoplasm. Increases the formation of ribosomal termination complexes and stimulates activities of RF-1 and RF-2. It binds guanine nucleotides and has strong preference for UGA stop codons. It may interact directly with the ribosome. The stimulation of RF-1 and RF-2 is significantly reduced by GTP and GDP, but not by GMP. The polypeptide is Peptide chain release factor 3 (Salmonella gallinarum (strain 287/91 / NCTC 13346)).